The primary structure comprises 216 residues: Thiopurine S-methyltransferase (216 aa).

Positions 10, 45, 66, and 123 each coordinate S-adenosyl-L-methionine.

Belongs to the class I-like SAM-binding methyltransferase superfamily. TPMT family.

The protein localises to the cytoplasm. It catalyses the reaction S-adenosyl-L-methionine + a thiopurine = S-adenosyl-L-homocysteine + a thiopurine S-methylether.. This chain is Thiopurine S-methyltransferase, found in Pseudomonas entomophila (strain L48).